The sequence spans 603 residues: Protein Spindly (603 aa).

Residue methionine 1 is modified to N-acetylmethionine. Residues 1–442 (MESDVIADLR…LKLKYEPEEK (442 aa)) adopt a coiled-coil conformation. 2 positions are modified to phosphoserine: serine 513 and serine 553. The segment at 542–577 (ALSERSRNTPNSPRLAAESRLQREVKQGKETASKLE) is disordered. Residues 561–577 (RLQREVKQGKETASKLE) are compositionally biased toward basic and acidic residues.

Belongs to the Spindly family. As to quaternary structure, interacts with KNTC1 and ZW10. These interactions appear weak and may be transient or indirect. Interacts with dynein intermediate chain and dynactin (DCTN1). Interacts with the catalytically active form of USP45. Post-translationally, monoubiquitinated with'Lys-48' linkage. Deubiquitinated by USP45.

It localises to the cytoplasm. The protein localises to the cytoskeleton. It is found in the microtubule organizing center. Its subcellular location is the centrosome. The protein resides in the chromosome. It localises to the centromere. The protein localises to the kinetochore. It is found in the nucleus. Its subcellular location is the spindle pole. Required for the localization of dynein and dynactin to the mitotic kintochore. Dynein is believed to control the initial lateral interaction between the kinetochore and spindle microtubules and to facilitate the subsequent formation of end-on kinetochore-microtubule attachments mediated by the NDC80 complex. Also required for correct spindle orientation. Does not appear to be required for the removal of spindle assembly checkpoint (SAC) proteins from the kinetochore upon bipolar spindle attachment. Acts as an adapter protein linking the dynein motor complex to various cargos and converts dynein from a non-processive to a highly processive motor in the presence of dynactin. Facilitates the interaction between dynein and dynactin and activates dynein processivity (the ability to move along a microtubule for a long distance without falling off the track). Plays a role in cell migration. The polypeptide is Protein Spindly (Bos taurus (Bovine)).